The primary structure comprises 230 residues: Poxin (230 aa).

The active-site Proton donor is the His43. The Shared with catalytic histidine of dimeric partner role is filled by Tyr174. The Proton acceptor; shared with catalytic histidine of dimeric partner role is filled by Lys178.

This sequence belongs to the poxin family. As to quaternary structure, homodimer.

It carries out the reaction 2',3'-cGAMP + H2O = Gp(2'-5')Ap(3') + H(+). Functionally, nuclease that cleaves host 2',3'-cGAMP. The chain is Poxin (P26) from Orgyia pseudotsugata multicapsid polyhedrosis virus (OpMNPV).